The primary structure comprises 589 residues: uncharacterized protein (589 aa).

Helical transmembrane passes span 90-110 (YIVIPGLMLSIFLSALDQTVI), 128-148 (SWIGTAYTLAQTSILPFCGIM), 162-182 (IVLFLFGSAMCGAAQNMLWLV), 189-209 (GIGGGGITSLVTIVIADITPL), 217-237 (GCMGVTWGLASVMGPLIGGAI), 245-265 (WIFFINLPTGGLSLALLIFFL), 284-304 (FVGIITITTGVVLFLVGLNIG), 311-331 (AHANVLCYLIFGILCIAGFVV), 355-375 (VMVTSFLHYYIVSTITYYIPV), 390-410 (VHTLSLAVVSSLLSAVSGMGI), 419-439 (PMIGGWIVLLAGTGSMIAIYY), 448-468 (GFLALTAVGTGNLFQPNLIAV), 483-503 (AFMLLRNMGASVGISMGAVIY), and 545-565 (IRMIWIVNCPVAGVGMLLSFF).

This sequence belongs to the major facilitator superfamily. TCR/Tet family.

Its subcellular location is the membrane. This is an uncharacterized protein from Schizosaccharomyces pombe (strain 972 / ATCC 24843) (Fission yeast).